The chain runs to 185 residues: ATP synthase subunit delta, chloroplastic (185 aa).

This sequence belongs to the ATPase delta chain family. As to quaternary structure, F-type ATPases have 2 components, F(1) - the catalytic core - and F(0) - the membrane proton channel. F(1) has five subunits: alpha(3), beta(3), gamma(1), delta(1), epsilon(1). CF(0) has four main subunits: a(1), b(1), b'(1) and c(10-14). The alpha and beta chains form an alternating ring which encloses part of the gamma chain. F(1) is attached to F(0) by a central stalk formed by the gamma and epsilon chains, while a peripheral stalk is formed by the delta, b and b' chains.

The protein resides in the plastid. Its subcellular location is the chloroplast thylakoid membrane. F(1)F(0) ATP synthase produces ATP from ADP in the presence of a proton or sodium gradient. F-type ATPases consist of two structural domains, F(1) containing the extramembraneous catalytic core and F(0) containing the membrane proton channel, linked together by a central stalk and a peripheral stalk. During catalysis, ATP synthesis in the catalytic domain of F(1) is coupled via a rotary mechanism of the central stalk subunits to proton translocation. Its function is as follows. This protein is part of the stalk that links CF(0) to CF(1). It either transmits conformational changes from CF(0) to CF(1) or is implicated in proton conduction. This chain is ATP synthase subunit delta, chloroplastic, found in Guillardia theta (Cryptophyte).